Consider the following 478-residue polypeptide: Chromosomal replication initiator protein DnaA (478 aa).

Positions 1 to 90 are domain I, interacts with DnaA modulators; sequence MSVELWQQCV…KRSSAPRAVQ (90 aa). The domain II stretch occupies residues 91-141; sequence PASPPPAVVQAAPVAIEEASAARTVDAQPVAPATVRTERSVQVEGGLKHTS. The interval 142–358 is domain III, AAA+ region; it reads YLNRAFTFEN…GALKRVIAHS (217 aa). Residues Gly186, Gly188, Lys189, and Thr190 each coordinate ATP. A domain IV, binds dsDNA region spans residues 359–478; that stretch reads HFTNHPITIE…YKNLLRTLTT (120 aa).

This sequence belongs to the DnaA family. Oligomerizes as a right-handed, spiral filament on DNA at oriC.

The protein localises to the cytoplasm. In terms of biological role, plays an essential role in the initiation and regulation of chromosomal replication. ATP-DnaA binds to the origin of replication (oriC) to initiate formation of the DNA replication initiation complex once per cell cycle. Binds the DnaA box (a 9 base pair repeat at the origin) and separates the double-stranded (ds)DNA. Forms a right-handed helical filament on oriC DNA; dsDNA binds to the exterior of the filament while single-stranded (ss)DNA is stabiized in the filament's interior. The ATP-DnaA-oriC complex binds and stabilizes one strand of the AT-rich DNA unwinding element (DUE), permitting loading of DNA polymerase. After initiation quickly degrades to an ADP-DnaA complex that is not apt for DNA replication. Binds acidic phospholipids. In Azotobacter vinelandii (strain DJ / ATCC BAA-1303), this protein is Chromosomal replication initiator protein DnaA.